A 678-amino-acid chain; its full sequence is Ribonuclease Z 2, mitochondrial (678 aa).

A mitochondrion-targeting transit peptide spans 1–37 (MKASLLVPRRALLFGQLLPPKYSWYSVKRWQSQLTFR).

It belongs to the RNase Z family. Zn(2+) serves as cofactor.

Its subcellular location is the mitochondrion. The protein localises to the cytoplasm. The enzyme catalyses Endonucleolytic cleavage of RNA, removing extra 3' nucleotides from tRNA precursor, generating 3' termini of tRNAs. A 3'-hydroxy group is left at the tRNA terminus and a 5'-phosphoryl group is left at the trailer molecule.. In terms of biological role, zinc phosphodiesterase, which displays some tRNA 3'-processing endonuclease activity. May be involved in tRNA maturation, by removing a 3'-trailer from precursor tRNA. The chain is Ribonuclease Z 2, mitochondrial (trz2) from Schizosaccharomyces pombe (strain 972 / ATCC 24843) (Fission yeast).